Consider the following 930-residue polypeptide: SCY1-like protein 2 (930 aa).

One can recognise a Protein kinase domain in the interval 32 to 327; sequence FDVGRHIASG…ADQMTKIPFF (296 aa). One copy of the HEAT repeat lies at 443-479; the sequence is DEIKNSVLPMVYRALEAPSIQIQELCLNIIPTFANLI. Residues serine 658 and serine 677 each carry the phosphoserine modification. Residues 658 to 706 are disordered; it reads SGSESENREDGMQGKQKRGSLTLEEKQKLAKEQEQAQKLKSQQPLKPQV. Residues 680–694 are compositionally biased toward basic and acidic residues; the sequence is LEEKQKLAKEQEQAQ. Residues 695–705 show a composition bias toward low complexity; the sequence is KLKSQQPLKPQ. Threonine 708 is modified (phosphothreonine). The interval 895–930 is disordered; the sequence is GMQGNPFFNPQNFAQPPPTTMTSSSSASNDLKDLFG. The segment covering 897–922 has biased composition (low complexity); sequence QGNPFFNPQNFAQPPPTTMTSSSSAS.

Belongs to the protein kinase superfamily. As to quaternary structure, interacts with clathrin and AP2B1; the interaction mediates the association with the AP-2 complex. Post-translationally, could autophosphorylate in presence of poly-L-lysine. Ubiquitously expressed.

It is found in the cytoplasmic vesicle. The protein localises to the clathrin-coated vesicle. It localises to the golgi apparatus. Its subcellular location is the trans-Golgi network membrane. The protein resides in the endosome membrane. Its function is as follows. Component of the AP2-containing clathrin coat that may regulate clathrin-dependent trafficking at plasma membrane, TGN and endosomal system. A possible serine/threonine-protein kinase toward the beta2-subunit of the plasma membrane adapter complex AP2 and other proteins in presence of poly-L-lysine has not been confirmed. By regulating the expression of excitatory receptors at synapses, plays an essential role in neuronal function and signaling and in brain development. This is SCY1-like protein 2 from Mus musculus (Mouse).